A 716-amino-acid chain; its full sequence is MPQLSKSLSFDGRDIRLELGLFAPQAGGSVLISSGDTAVLVAATRSTAREGIDFLPLTVDYEERMYAAGRIPGGFLRREGRPPERATLTSRLIDRPLRPLFPSWLRDDLQVVATTLSMDETVPPDVLAATGASIATLVAKIPFYGPMAAVRVGLVGDDFIINPTYREIEKGDLDLVVAGTPAGVIMVEAGANQLPEADVIEAIDFGYEAVQELIKAQQSLLAELGIEQILPEAPNADNTLENFVRDRASSGVQQVLQHFSFTKSERDAALDEVKASVVEAIAALPEEDPVRSVTAAEPKALGNTFKALTKTLMRQQILRDGVRVDGRKLDQVRPISSQVGLLPPRVHGSGLFQRGLTQVLSIATLGTPGDAQELDDLHPDTQKRYLHHYNMPPYSVGETRPMRSPGRREIGHGALAERALLPVLPSKEEFPYVIRVVSEVLSSNGSTSMGSVCGSTLALMDAGVPIKKPVSGAAMGLIREGDEYRVLTDIQGIEDFLGDMDFKVAGTDQGITALQMDMKIHGLPLEIIADAINQAKPARLHILNKMLEAIATPRADLSTYAPRLFRIQINPEQIGLVIGPGGKTIRSITEQTGAKIDIEDTGAVTISAVDADSALRAKSIIEGMTRTITAGDVYIGKVTRIIPIGAFVEFLPGKEGMIHISQIADYRVARVEDELTVGDEVVVKVREIDQKGRVNLTRKGIDPEEVSAARAAVEAS.

2 residues coordinate Mg(2+): Asp-495 and Asp-501. One can recognise a KH domain in the interval 562-621; sequence PRLFRIQINPEQIGLVIGPGGKTIRSITEQTGAKIDIEDTGAVTISAVDADSALRAKSII. Residues 631-699 form the S1 motif domain; sequence GDVYIGKVTR…QKGRVNLTRK (69 aa).

It belongs to the polyribonucleotide nucleotidyltransferase family. Mg(2+) serves as cofactor.

It localises to the cytoplasm. The catalysed reaction is RNA(n+1) + phosphate = RNA(n) + a ribonucleoside 5'-diphosphate. Involved in mRNA degradation. Catalyzes the phosphorolysis of single-stranded polyribonucleotides processively in the 3'- to 5'-direction. In Synechococcus sp. (strain ATCC 27144 / PCC 6301 / SAUG 1402/1) (Anacystis nidulans), this protein is Polyribonucleotide nucleotidyltransferase.